A 233-amino-acid chain; its full sequence is Delta-actitoxin-Amc1a (233 aa).

A signal peptide spans 1–18; it reads MKRIFIVALLFATCLVNA. Propeptides lie at residues 19-29 and 30-33; these read KPSINDADIKR and EPEP. The residue at position 39 (Pro-39) is a Hydroxyproline. Intrachain disulfides connect Cys-40-Cys-51 and Cys-43-Cys-58. Propeptides lie at residues 61–63 and 64–67; these read RKR and EPEP. Position 73 is a hydroxyproline (Pro-73). 2 cysteine pairs are disulfide-bonded: Cys-74/Cys-85 and Cys-77/Cys-92. Propeptides lie at residues 95–97 and 98–101; these read RKR and EPEP. Pro-107 bears the Hydroxyproline mark. Cystine bridges form between Cys-108-Cys-119 and Cys-111-Cys-126. Propeptides lie at residues 129 to 131 and 132 to 135; these read RKR and EPEP. Pro-141 carries the post-translational modification Hydroxyproline. 2 cysteine pairs are disulfide-bonded: Cys-142–Cys-153 and Cys-145–Cys-160. 2 consecutive propeptides follow at residues 163 to 165 and 166 to 169; these read RKR and EPEP. At Pro-175 the chain carries Hydroxyproline. 2 cysteine pairs are disulfide-bonded: Cys-176–Cys-187 and Cys-179–Cys-194. 2 propeptides span residues 197–199 and 200–203; these read RKR and EPEP. At Pro-209 the chain carries Hydroxyproline. Disulfide bonds link Cys-210–Cys-221 and Cys-213–Cys-228. Residues 231–233 constitute a propeptide that is removed on maturation; sequence RKR.

This sequence belongs to the sea anemone BBH family. Post-translationally, each Am I peptide may contain 2 disulfide bonds. The precursor protein seems to be processed in the following sequence: release of the signal peptide and of the propeptide, production of six identical 34-residue peptides by cleavage between Arg and Glu, release of four N-terminal and three C-terminal residues from each peptide and hydroxylation of each Pro in position 6 of the resulting 27-residue peptides.

Its subcellular location is the secreted. The protein resides in the nematocyst. May inhibit voltage-gated sodium channels (Nav). The polypeptide is Delta-actitoxin-Amc1a (Antheopsis maculata (Sea anemone)).